Reading from the N-terminus, the 367-residue chain is Spermidine/putrescine import ATP-binding protein PotA (367 aa).

One can recognise an ABC transporter domain in the interval Ile10 to Ile240. Position 42–49 (Gly42–Ser49) interacts with ATP.

The protein belongs to the ABC transporter superfamily. Spermidine/putrescine importer (TC 3.A.1.11.1) family. The complex is composed of two ATP-binding proteins (PotA), two transmembrane proteins (PotB and PotC) and a solute-binding protein (PotD).

The protein localises to the cell membrane. The catalysed reaction is ATP + H2O + polyamine-[polyamine-binding protein]Side 1 = ADP + phosphate + polyamineSide 2 + [polyamine-binding protein]Side 1.. Its function is as follows. Part of the ABC transporter complex PotABCD involved in spermidine/putrescine import. Responsible for energy coupling to the transport system. This is Spermidine/putrescine import ATP-binding protein PotA from Oenococcus oeni (strain ATCC BAA-331 / PSU-1).